The primary structure comprises 235 residues: KNMITGAAQMDGGILVVSAADGPMPQTREHILLAKQVGVPSLVVFLNKEDQVDDAELLELVELEVRELLSIYDFPGDDIPIVIGSALKAVEALTATPTTKKGDNEWVDKILKLMDEVDEYIPTPEREIDKPFLMAVEDVFSITGRGTVATGRIERGKIKVGETVELVGIRNTRSTTVTGVEMFQKVLEEGMAGDNVGLLLRGIQKEDIERGMVIAKPGSITPHTQFEGEVYVLTK.

The 125-residue stretch at 1 to 125 (KNMITGAAQM…EVDEYIPTPE (125 aa)) folds into the tr-type G domain. Position 47–50 (47–50 (NKED)) interacts with GTP.

Belongs to the TRAFAC class translation factor GTPase superfamily. Classic translation factor GTPase family. EF-Tu/EF-1A subfamily. In terms of assembly, monomer.

Its subcellular location is the cytoplasm. The catalysed reaction is GTP + H2O = GDP + phosphate + H(+). Its function is as follows. GTP hydrolase that promotes the GTP-dependent binding of aminoacyl-tRNA to the A-site of ribosomes during protein biosynthesis. The chain is Elongation factor Tu (tufA) from Gloeothece membranacea (strain PCC 6501 / SAG 26.84).